The following is a 673-amino-acid chain: Probable serine/threonine-protein kinase SCO3848 (673 aa).

The Protein kinase domain maps to 11–277 (YELGPVLGRG…EMRVDIEACL (267 aa)). Residues 17 to 25 (LGRGGMAEV) and lysine 40 contribute to the ATP site. The active-site Proton acceptor is the aspartate 138. The tract at residues 302–345 (DQPTTALRSDGGGGATTMLPPMNPDDGGYGYDERPDRRRQQPRK) is disordered. PASTA domains are found at residues 379-445 (GNDK…VVST), 446-511 (GAPK…EVAK), 512-580 (AEEK…VVGK), and 581-649 (AVEK…MTVP). A disordered region spans residues 472 to 500 (FEVETKQTESSQDEGTILSQNPDPGKELE). The span at 479-493 (TESSQDEGTILSQNP) shows a compositional bias: polar residues. Disordered regions lie at residues 613–641 (AQGSPGDDNAKVFASNPQPGSEVDDPAAT) and 653–673 (GNGNGGNGNGGAIAGLPGFGD).

This sequence belongs to the protein kinase superfamily. Ser/Thr protein kinase family.

It carries out the reaction L-seryl-[protein] + ATP = O-phospho-L-seryl-[protein] + ADP + H(+). The enzyme catalyses L-threonyl-[protein] + ATP = O-phospho-L-threonyl-[protein] + ADP + H(+). This is Probable serine/threonine-protein kinase SCO3848 from Streptomyces coelicolor (strain ATCC BAA-471 / A3(2) / M145).